The chain runs to 130 residues: Ribonuclease pancreatic (130 aa).

Residues 1-6 (VQPSLG) form the signal peptide. Residues lysine 13 and arginine 16 each contribute to the substrate site. Histidine 18 serves as the catalytic Proton acceptor. 4 cysteine pairs are disulfide-bonded: cysteine 32-cysteine 90, cysteine 46-cysteine 101, cysteine 64-cysteine 116, and cysteine 71-cysteine 78. Asparagine 40 carries N-linked (GlcNAc...) asparagine glycosylation. Residues 47–51 (KPVNT), lysine 72, and arginine 91 contribute to the substrate site. Catalysis depends on histidine 125, which acts as the Proton donor.

The protein belongs to the pancreatic ribonuclease family. Monomer. Interacts with and forms tight 1:1 complexes with RNH1. Dimerization of two such complexes may occur. Interaction with RNH1 inhibits this protein. In terms of tissue distribution, pancreas.

The protein resides in the secreted. The enzyme catalyses an [RNA] containing cytidine + H2O = an [RNA]-3'-cytidine-3'-phosphate + a 5'-hydroxy-ribonucleotide-3'-[RNA].. The catalysed reaction is an [RNA] containing uridine + H2O = an [RNA]-3'-uridine-3'-phosphate + a 5'-hydroxy-ribonucleotide-3'-[RNA].. Functionally, endonuclease that catalyzes the cleavage of RNA on the 3' side of pyrimidine nucleotides. Acts on single-stranded and double-stranded RNA. The polypeptide is Ribonuclease pancreatic (RNASE1) (Cricetulus griseus (Chinese hamster)).